A 699-amino-acid chain; its full sequence is Pollen-specific leucine-rich repeat extensin-like protein 4 (699 aa).

An N-terminal signal peptide occupies residues 1 to 39 (MPFYKQPWVFSKVFVLAMAKPPSFGCCFFLLFFSFLSSS). A glycan (N-linked (GlcNAc...) asparagine) is linked at asparagine 106. LRR repeat units lie at residues 133-157 (VTVVAGVDLNGADIAGHLPAELGLM), 158-180 (TDVAMFHLNSNRFCGIIPKSFEK), 182-205 (KLMHEFDVSNNRFVGPFPNVVLSW), 206-229 (PDVKYFDLRFNDFEGQVPPELFKK), 231-251 (LDAIFLNDNRFTSVIPESLGE), 253-275 (PASVVTFANNKFTGCIPKSIGNM), 276-299 (KNLNEIVFMDNDLGGCFPSEIGKL), 301-323 (NVTVFDASKNSFIGRLPTSFVGL), and 324-347 (TSVEEIDISGNKLTGLVPHNICQL). Asparagine 301 is a glycosylation site (N-linked (GlcNAc...) asparagine). Asparagine 352 carries N-linked (GlcNAc...) asparagine glycosylation. Residues 411 to 699 (KCAGGSSTPS…SPPPPMFAGY (289 aa)) are disordered. Composition is skewed to pro residues over residues 421 to 466 (KPSP…PVPT), 482 to 504 (KPSPVPSRPVQKPQPPKESPQPD), 518 to 659 (PPPA…PPAP), and 690 to 699 (SPPPPMFAGY). Positions 517–699 (SPPPAPVNSP…SPPPPMFAGY (183 aa)) are contains the Ser-Pro(4) repeats.

Post-translationally, hydroxylated on proline residues in the S-P-P-P-P repeat. O-glycosylated on hydroxyprolines. As to expression, expressed in flowers, stamen, pollen, and pollinated carpels.

It is found in the secreted. The protein localises to the cell wall. Functionally, modulates cell morphogenesis by regulating cell wall formation and assembly, and/or growth polarization. The chain is Pollen-specific leucine-rich repeat extensin-like protein 4 (PEX4) from Arabidopsis thaliana (Mouse-ear cress).